The following is a 676-amino-acid chain: Head-specific guanylate cyclase (676 aa).

Positions 466 to 593 constitute a Guanylate cyclase domain; the sequence is TILFSDIVGF…HSVTIANKFE (128 aa).

The protein belongs to the adenylyl cyclase class-4/guanylyl cyclase family. As to quaternary structure, heterodimer. Head, where it is preferentially expressed in the CNS and the retina. Not found in bodies.

It localises to the cytoplasm. It carries out the reaction GTP = 3',5'-cyclic GMP + diphosphate. Its function is as follows. May have a role in phototransduction. Catalyzes the conversion of GTP to cGMP, a common second messenger that is utilized in a wide variety of cells and signal transduction pathways. A second subunit is required for enzyme activity. The sequence is that of Head-specific guanylate cyclase (Gycalpha99B) from Drosophila melanogaster (Fruit fly).